The chain runs to 483 residues: Cysteine proteinase 1, mitochondrial (483 aa).

A mitochondrion-targeting transit peptide spans 1–30 (MLPTSVSRSLYLKTFRSHLLRAPQIVLKRM). Catalysis depends on residues Cys-102, His-398, and Asn-421. Lys-483 is a propeptide (removed in mature form; by autocatalysis).

Belongs to the peptidase C1 family. As to quaternary structure, homohexamer. Binds to nucleic acids. Binds single-stranded DNA and RNA with higher affinity than double-stranded DNA. Post-translationally, the N-terminus of isoform Cytoplasmic is blocked.

Its subcellular location is the mitochondrion. It localises to the cytoplasm. The catalysed reaction is Inactivates bleomycin B2 (a cytotoxic glycometallopeptide) by hydrolysis of a carboxyamide bond of beta-aminoalanine, but also shows general aminopeptidase activity. The specificity varies somewhat with source, but amino acid arylamides of Met, Leu and Ala are preferred.. Its activity is regulated as follows. Inhibited by E64, a specific inhibitor of cysteine proteases, N-ethylmaleimide, iodacetamide, and mercury and zinc ions. In terms of biological role, the normal physiological role of the enzyme is unknown, but it is not essential for the viability of yeast cells. Has aminopeptidase activity, shortening substrate peptides sequentially by 1 amino acid. Has bleomycin hydrolase activity, which can protect the cell from the toxic effects of bleomycin. Has homocysteine-thiolactonase activity, protecting the cell against homocysteine toxicity. Acts as a repressor in the GAL4 regulatory system, but this does not require either the peptidase or nucleic acid-binding activities. This Saccharomyces cerevisiae (strain JAY291) (Baker's yeast) protein is Cysteine proteinase 1, mitochondrial (LAP3).